A 559-amino-acid polypeptide reads, in one-letter code: Urocanate hydratase (559 aa).

Residues 49 to 50 (GG), glutamine 127, 173 to 175 (GMG), aspartate 193, arginine 198, 239 to 240 (NA), 260 to 264 (QTSAH), 270 to 271 (YL), and tyrosine 319 contribute to the NAD(+) site. Residue cysteine 407 is part of the active site. Glycine 489 is an NAD(+) binding site.

It belongs to the urocanase family. NAD(+) serves as cofactor.

Its subcellular location is the cytoplasm. The enzyme catalyses 4-imidazolone-5-propanoate = trans-urocanate + H2O. It participates in amino-acid degradation; L-histidine degradation into L-glutamate; N-formimidoyl-L-glutamate from L-histidine: step 2/3. In terms of biological role, catalyzes the conversion of urocanate to 4-imidazolone-5-propionate. The protein is Urocanate hydratase of Shouchella clausii (strain KSM-K16) (Alkalihalobacillus clausii).